The sequence spans 430 residues: Pre-B-cell leukemia transcription factor 2 (430 aa).

Residues 1–52 are disordered; the sequence is MDERLLGPPPPGGGRGGLGLVSGEPGGPGEPPGGGDPGGGSGGVPGGRGKQD. Over residues 13–48 the composition is skewed to gly residues; sequence GGRGGLGLVSGEPGGPGEPPGGGDPGGGSGGVPGGR. The region spanning 48–243 is the PBC domain; that stretch reads RGKQDIGDIL…VMILRSRFLD (196 aa). Positions 55–134 are PBC-A; the sequence is DILQQIMTIT…EGVAGPEKGG (80 aa). Ser-136, Ser-151, and Ser-159 each carry phosphoserine. Residues 137–243 are PBC-B; the sequence is AAAAAAAAAS…VMILRSRFLD (107 aa). A DNA-binding region (homeobox; TALE-type) is located at residues 244 to 306; that stretch reads ARRKRRNFSK…NKRIRYKKNI (63 aa). Disordered regions lie at residues 326–347 and 378–430; these read QGGHSRTSSPTPPSSAGSGGSF and SMGP…DTSN. Position 330 is a phosphoserine (Ser-330). The span at 380 to 392 shows a compositional bias: gly residues; that stretch reads GPGGYGDNLGGGQ. A Phosphoserine modification is found at Ser-395. The segment covering 403-418 has biased composition (polar residues); it reads GSWQEAVTPSSVTSPT.

It belongs to the TALE/PBX homeobox family. As to quaternary structure, forms heterodimers with MEIS1 and heterotrimers with MEIS1 and HOXA9. Interacts with PBXIP1. As to expression, ubiquitously expressed.

It is found in the nucleus. Its function is as follows. Transcriptional activator that binds the sequence 5'-ATCAATCAA-3'. Activates transcription of PF4 in complex with MEIS1. The sequence is that of Pre-B-cell leukemia transcription factor 2 (PBX2) from Homo sapiens (Human).